The primary structure comprises 118 residues: MTVLSQAHCEACRADAPKVSEQELADLIRQIPDWRVENRDGILQLEKVFAFRNFARALAFTDAVGALAEAEGHHPALLTEWGRVTVTWWTHKIRGLHRNDFIMAARTDELAKGAEDRA.

It belongs to the pterin-4-alpha-carbinolamine dehydratase family.

The enzyme catalyses (4aS,6R)-4a-hydroxy-L-erythro-5,6,7,8-tetrahydrobiopterin = (6R)-L-erythro-6,7-dihydrobiopterin + H2O. The polypeptide is Putative pterin-4-alpha-carbinolamine dehydratase (Azotobacter vinelandii (strain DJ / ATCC BAA-1303)).